The sequence spans 370 residues: DNA replication and repair protein RecF (370 aa).

Position 30-37 (30-37 (GENAQGKT)) interacts with ATP.

Belongs to the RecF family.

The protein localises to the cytoplasm. The RecF protein is involved in DNA metabolism; it is required for DNA replication and normal SOS inducibility. RecF binds preferentially to single-stranded, linear DNA. It also seems to bind ATP. The sequence is that of DNA replication and repair protein RecF from Listeria monocytogenes serotype 4b (strain CLIP80459).